Consider the following 312-residue polypeptide: DDRGK domain-containing protein 1 (312 aa).

Topologically, residues 1 to 2 (ME) are lumenal. The chain crosses the membrane as a helical span at residues 3–23 (LIILVGIATALLVVIITLYLL). At 24-312 (QKKNAAPETK…ISAGGEEASS (289 aa)) the chain is on the cytoplasmic side. The segment covering 59 to 79 (NQRNRLRQNAPAAPAGQVAPA) has biased composition (low complexity). Residues 59 to 162 (NQRNRLRQNA…RKHQEDLEAE (104 aa)) are disordered. The segment covering 110-162 (LDEKMGAKKRAKMEAKEQKRLQREQELHDREQRKVKEAKEEAERKHQEDLEAE) has biased composition (basic and acidic residues).

Belongs to the DDRGK1 family. Interacts with Atg9; the interaction is transient.

The protein resides in the endoplasmic reticulum membrane. Its function is as follows. Substrate adapter for ufmylation, the covalent attachment of the ubiquitin-like modifier UFM1 to substrate proteins. Required for ufmylation of Atg9; protects the nervous system during aging, possibly by stabilizing Atg9 and supporting its function. In Drosophila yakuba (Fruit fly), this protein is DDRGK domain-containing protein 1.